The sequence spans 270 residues: 4-hydroxy-tetrahydrodipicolinate reductase (270 aa).

NAD(+) contacts are provided by residues 9-14 (GAGGRM) and Glu35. An NADP(+)-binding site is contributed by Arg36. NAD(+) is bound by residues 99–101 (GTT) and 123–126 (ASNF). His156 acts as the Proton donor/acceptor in catalysis. His157 is a (S)-2,3,4,5-tetrahydrodipicolinate binding site. Catalysis depends on Lys160, which acts as the Proton donor. Position 166 to 167 (166 to 167 (GT)) interacts with (S)-2,3,4,5-tetrahydrodipicolinate.

This sequence belongs to the DapB family.

It localises to the cytoplasm. The enzyme catalyses (S)-2,3,4,5-tetrahydrodipicolinate + NAD(+) + H2O = (2S,4S)-4-hydroxy-2,3,4,5-tetrahydrodipicolinate + NADH + H(+). It catalyses the reaction (S)-2,3,4,5-tetrahydrodipicolinate + NADP(+) + H2O = (2S,4S)-4-hydroxy-2,3,4,5-tetrahydrodipicolinate + NADPH + H(+). It functions in the pathway amino-acid biosynthesis; L-lysine biosynthesis via DAP pathway; (S)-tetrahydrodipicolinate from L-aspartate: step 4/4. In terms of biological role, catalyzes the conversion of 4-hydroxy-tetrahydrodipicolinate (HTPA) to tetrahydrodipicolinate. This is 4-hydroxy-tetrahydrodipicolinate reductase from Haemophilus influenzae (strain PittGG).